We begin with the raw amino-acid sequence, 917 residues long: Translation initiation factor IF-2 (917 aa).

Over residues 102-249 (EKSQAEEQAL…KWTAEPKAPE (148 aa)) the composition is skewed to basic and acidic residues. Residues 102-326 (EKSQAEEQAL…KSSTLQQGFH (225 aa)) form a disordered region. Over residues 279–293 (RRGRTAKAPRAKKNN) the composition is skewed to basic residues. Over residues 294-306 (RHSEKADREEARA) the composition is skewed to basic and acidic residues. Residues 416 to 585 (SRAPVVTIMG…LLQAEVLELK (170 aa)) form the tr-type G domain. The G1 stretch occupies residues 425-432 (GHVDHGKT). 425 to 432 (GHVDHGKT) contributes to the GTP binding site. The segment at 450–454 (GITQH) is G2. Positions 471 to 474 (DTPG) are G3. Residues 471–475 (DTPGH) and 525–528 (NKID) contribute to the GTP site. Residues 525–528 (NKID) are G4. Residues 561–563 (SAK) are G5.

The protein belongs to the TRAFAC class translation factor GTPase superfamily. Classic translation factor GTPase family. IF-2 subfamily.

It is found in the cytoplasm. Its function is as follows. One of the essential components for the initiation of protein synthesis. Protects formylmethionyl-tRNA from spontaneous hydrolysis and promotes its binding to the 30S ribosomal subunits. Also involved in the hydrolysis of GTP during the formation of the 70S ribosomal complex. This chain is Translation initiation factor IF-2 (infB), found in Proteus vulgaris.